Here is a 126-residue protein sequence, read N- to C-terminus: Histone H2B type 1-K (126 aa).

The segment covering 1–12 (MPEPAKSAPAPK) has biased composition (low complexity). The segment at 1-36 (MPEPAKSAPAPKKGSKKAVTKAQKIDGKKRKRSRKE) is disordered. At Pro-2 the chain carries N-acetylproline. At Glu-3 the chain carries ADP-ribosyl glutamic acid. An N6-(2-hydroxyisobutyryl)lysine; alternate modification is found at Lys-6. Lys-6 is modified (N6-(beta-hydroxybutyryl)lysine; alternate). At Lys-6 the chain carries N6-acetyllysine; alternate. An N6-butyryllysine; alternate modification is found at Lys-6. The residue at position 6 (Lys-6) is an N6-crotonyllysine; alternate. Position 6 is an N6-lactoyllysine; alternate (Lys-6). Lys-6 participates in a covalent cross-link: Glycyl lysine isopeptide (Lys-Gly) (interchain with G-Cter in SUMO2); alternate. Ser-7 carries the post-translational modification ADP-ribosylserine. Position 12 is an N6-(beta-hydroxybutyryl)lysine; alternate (Lys-12). 2 positions are modified to N6-acetyllysine; alternate: Lys-12 and Lys-13. 2 positions are modified to N6-crotonyllysine; alternate: Lys-12 and Lys-13. At Lys-12 the chain carries N6-lactoyllysine; alternate. The residue at position 13 (Lys-13) is an N6-(2-hydroxyisobutyryl)lysine; alternate. Ser-15 is subject to Phosphoserine; by STK4/MST1. N6-acetyllysine; alternate occurs at positions 16, 17, 21, and 24. N6-crotonyllysine; alternate occurs at positions 16, 17, 21, 24, and 35. N6-lactoyllysine; alternate is present on residues Lys-16, Lys-17, Lys-21, and Lys-24. Residue Lys-17 is modified to N6-glutaryllysine; alternate. Lys-21, Lys-24, and Lys-35 each carry N6-(2-hydroxyisobutyryl)lysine; alternate. Lys-21 carries the post-translational modification N6-(beta-hydroxybutyryl)lysine; alternate. Lys-21 carries the N6-butyryllysine; alternate modification. Lys-21 participates in a covalent cross-link: Glycyl lysine isopeptide (Lys-Gly) (interchain with G-Cter in SUMO2); alternate. Position 35 is an N6-(beta-hydroxybutyryl)lysine; alternate (Lys-35). Lys-35 bears the N6-glutaryllysine; alternate mark. Lys-35 bears the N6-succinyllysine; alternate mark. Residue Lys-35 forms a Glycyl lysine isopeptide (Lys-Gly) (interchain with G-Cter in ubiquitin); alternate linkage. Position 36 is a polyADP-ribosyl glutamic acid (Glu-36). At Ser-37 the chain carries Phosphoserine; by AMPK. An N6-(2-hydroxyisobutyryl)lysine; alternate mark is found at Lys-44, Lys-47, and Lys-58. N6-lactoyllysine; alternate is present on Lys-44. Lys-44 and Lys-47 each carry N6-glutaryllysine; alternate. N6-methyllysine; alternate is present on Lys-47. An N6,N6-dimethyllysine; alternate modification is found at Lys-58. Arg-80 carries the post-translational modification Dimethylated arginine. Lys-86 bears the N6-(2-hydroxyisobutyryl)lysine; alternate mark. Lys-86 carries the post-translational modification N6-acetyllysine; alternate. Lys-86 bears the N6-lactoyllysine; alternate mark. At Lys-86 the chain carries N6,N6,N6-trimethyllysine; alternate. Omega-N-methylarginine occurs at positions 87 and 93. N6-(2-hydroxyisobutyryl)lysine; alternate is present on Lys-109. Lys-109 is modified (N6-lactoyllysine; alternate). Position 109 is an N6-glutaryllysine; alternate (Lys-109). At Lys-109 the chain carries N6-methyllysine; alternate. Ser-113 carries O-linked (GlcNAc) serine glycosylation. A Phosphothreonine modification is found at Thr-116. N6-(2-hydroxyisobutyryl)lysine; alternate occurs at positions 117 and 121. Lys-117 bears the N6-(beta-hydroxybutyryl)lysine; alternate mark. Lys-117 and Lys-121 each carry N6-lactoyllysine; alternate. An N6-glutaryllysine; alternate mark is found at Lys-117 and Lys-121. N6-succinyllysine; alternate occurs at positions 117 and 121. Lys-117 carries the post-translational modification N6-methylated lysine; alternate. Lys-121 is covalently cross-linked (Glycyl lysine isopeptide (Lys-Gly) (interchain with G-Cter in ubiquitin); alternate).

Belongs to the histone H2B family. In terms of assembly, the nucleosome is a histone octamer containing two molecules each of H2A, H2B, H3 and H4 assembled in one H3-H4 heterotetramer and two H2A-H2B heterodimers. The octamer wraps approximately 147 bp of DNA. Monoubiquitination at Lys-35 (H2BK34Ub) by the MSL1/MSL2 dimer is required for histone H3 'Lys-4' (H3K4me) and 'Lys-79' (H3K79me) methylation and transcription activation at specific gene loci, such as HOXA9 and MEIS1 loci. Similarly, monoubiquitination at Lys-121 (H2BK120Ub) by the RNF20/40 complex gives a specific tag for epigenetic transcriptional activation and is also prerequisite for histone H3 'Lys-4' and 'Lys-79' methylation. It also functions cooperatively with the FACT dimer to stimulate elongation by RNA polymerase II. H2BK120Ub also acts as a regulator of mRNA splicing: deubiquitination by USP49 is required for efficient cotranscriptional splicing of a large set of exons. Post-translationally, phosphorylated on Ser-15 (H2BS14ph) by STK4/MST1 during apoptosis; which facilitates apoptotic chromatin condensation. Also phosphorylated on Ser-15 in response to DNA double strand breaks (DSBs), and in correlation with somatic hypermutation and immunoglobulin class-switch recombination. Phosphorylation at Ser-37 (H2BS36ph) by AMPK in response to stress promotes transcription. In terms of processing, glcNAcylation at Ser-113 promotes monoubiquitination of Lys-121. It fluctuates in response to extracellular glucose, and associates with transcribed genes. ADP-ribosylated by PARP1 or PARP2 on Ser-7 (H2BS6ADPr) in response to DNA damage. H2BS6ADPr promotes recruitment of CHD1L. Mono-ADP-ribosylated on Glu-3 (H2BE2ADPr) by PARP3 in response to single-strand breaks. Poly ADP-ribosylation on Glu-36 (H2BE35ADPr) by PARP1 regulates adipogenesis: it inhibits phosphorylation at Ser-37 (H2BS36ph), thereby blocking expression of pro-adipogenetic genes. Post-translationally, crotonylation (Kcr) is specifically present in male germ cells and marks testis-specific genes in post-meiotic cells, including X-linked genes that escape sex chromosome inactivation in haploid cells. Crotonylation marks active promoters and enhancers and confers resistance to transcriptional repressors. It is also associated with post-meiotically activated genes on autosomes. In terms of processing, lactylated in macrophages by EP300/P300 by using lactoyl-CoA directly derived from endogenous or exogenous lactate, leading to stimulates gene transcription.

The protein resides in the nucleus. It localises to the chromosome. Core component of nucleosome. Nucleosomes wrap and compact DNA into chromatin, limiting DNA accessibility to the cellular machineries which require DNA as a template. Histones thereby play a central role in transcription regulation, DNA repair, DNA replication and chromosomal stability. DNA accessibility is regulated via a complex set of post-translational modifications of histones, also called histone code, and nucleosome remodeling. The protein is Histone H2B type 1-K of Bos taurus (Bovine).